The sequence spans 406 residues: Exodeoxyribonuclease 7 large subunit (406 aa).

It belongs to the XseA family. Heterooligomer composed of large and small subunits.

The protein localises to the cytoplasm. It catalyses the reaction Exonucleolytic cleavage in either 5'- to 3'- or 3'- to 5'-direction to yield nucleoside 5'-phosphates.. In terms of biological role, bidirectionally degrades single-stranded DNA into large acid-insoluble oligonucleotides, which are then degraded further into small acid-soluble oligonucleotides. In Desulfitobacterium hafniense (strain Y51), this protein is Exodeoxyribonuclease 7 large subunit.